Here is a 531-residue protein sequence, read N- to C-terminus: Putative F-box protein At2g02890 (531 aa).

One can recognise an F-box domain in the interval 141-188 (RHSSSLTNDLIEEILSRLHSKSVARFRCVSKQCASMFASPYFKKLFQT).

The protein is Putative F-box protein At2g02890 of Arabidopsis thaliana (Mouse-ear cress).